Consider the following 714-residue polypeptide: Polyribonucleotide nucleotidyltransferase (714 aa).

Mg(2+) contacts are provided by D487 and D493. Residues 554-613 (PRIEVMTIPVDKIREVIGSGGKVIREIVEKTGAKINIEDDGTIKIASASGKEIEAARKWI) enclose the KH domain. One can recognise an S1 motif domain in the interval 623–691 (GVVYEGTVVK…ERGKVRLSMK (69 aa)).

This sequence belongs to the polyribonucleotide nucleotidyltransferase family. The cofactor is Mg(2+).

Its subcellular location is the cytoplasm. The enzyme catalyses RNA(n+1) + phosphate = RNA(n) + a ribonucleoside 5'-diphosphate. In terms of biological role, involved in mRNA degradation. Catalyzes the phosphorolysis of single-stranded polyribonucleotides processively in the 3'- to 5'-direction. This Allorhizobium ampelinum (strain ATCC BAA-846 / DSM 112012 / S4) (Agrobacterium vitis (strain S4)) protein is Polyribonucleotide nucleotidyltransferase.